Reading from the N-terminus, the 344-residue chain is tRNA N6-adenosine threonylcarbamoyltransferase (344 aa).

Fe cation is bound by residues H111 and H115. Substrate-binding positions include 134–138 (LVSGG), D167, G180, and N273. Fe cation is bound at residue D301.

Belongs to the KAE1 / TsaD family. The cofactor is Fe(2+).

It localises to the cytoplasm. The enzyme catalyses L-threonylcarbamoyladenylate + adenosine(37) in tRNA = N(6)-L-threonylcarbamoyladenosine(37) in tRNA + AMP + H(+). In terms of biological role, required for the formation of a threonylcarbamoyl group on adenosine at position 37 (t(6)A37) in tRNAs that read codons beginning with adenine. Is involved in the transfer of the threonylcarbamoyl moiety of threonylcarbamoyl-AMP (TC-AMP) to the N6 group of A37, together with TsaE and TsaB. TsaD likely plays a direct catalytic role in this reaction. This chain is tRNA N6-adenosine threonylcarbamoyltransferase, found in Cupriavidus pinatubonensis (strain JMP 134 / LMG 1197) (Cupriavidus necator (strain JMP 134)).